The primary structure comprises 330 residues: DNA-directed RNA polymerase subunit alpha (330 aa).

Residues 1 to 231 (MALFNFQKPD…IHHFMLFSDE (231 aa)) form an alpha N-terminal domain (alpha-NTD) region. Residues 253-330 (MRQLLKTKLV…DLAKYKLDKE (78 aa)) form an alpha C-terminal domain (alpha-CTD) region.

This sequence belongs to the RNA polymerase alpha chain family. Homodimer. The RNAP catalytic core consists of 2 alpha, 1 beta, 1 beta' and 1 omega subunit. When a sigma factor is associated with the core the holoenzyme is formed, which can initiate transcription.

The catalysed reaction is RNA(n) + a ribonucleoside 5'-triphosphate = RNA(n+1) + diphosphate. Its function is as follows. DNA-dependent RNA polymerase catalyzes the transcription of DNA into RNA using the four ribonucleoside triphosphates as substrates. This chain is DNA-directed RNA polymerase subunit alpha, found in Flavobacterium psychrophilum (strain ATCC 49511 / DSM 21280 / CIP 103535 / JIP02/86).